Here is a 273-residue protein sequence, read N- to C-terminus: Type II pantothenate kinase (273 aa).

Residue 8–15 (DAGGTLTK) coordinates ATP. Glutamate 76 (proton acceptor) is an active-site residue. ATP is bound by residues threonine 105, 127 to 131 (GGTIM), phenylalanine 143, and serine 230.

This sequence belongs to the type II pantothenate kinase family. As to quaternary structure, homodimer.

Its subcellular location is the cytoplasm. It carries out the reaction (R)-pantothenate + ATP = (R)-4'-phosphopantothenate + ADP + H(+). It participates in cofactor biosynthesis; coenzyme A biosynthesis; CoA from (R)-pantothenate: step 1/5. Its function is as follows. Catalyzes the phosphorylation of pantothenate (Pan), the first step in CoA biosynthesis. This chain is Type II pantothenate kinase, found in Bacillus cereus (strain G9842).